The chain runs to 645 residues: UPF0313 protein CLK_3381 (645 aa).

A Radical SAM core domain is found at 295–566; it reads AIKEVKFSIT…RMQRALLQFS (272 aa). Residues Cys-309, Cys-313, and Cys-316 each contribute to the [4Fe-4S] cluster site. The tract at residues 598-645 is disordered; sequence NKPYKKSHKKNNVKNNNNHYNKNNNYNKNKDVSKKNKKNSLSKHKKRK. Residues 600–609 are compositionally biased toward basic residues; that stretch reads PYKKSHKKNN. The span at 610 to 624 shows a compositional bias: low complexity; sequence VKNNNNHYNKNNNYN. Residues 632-645 are compositionally biased toward basic residues; that stretch reads KNKKNSLSKHKKRK.

It belongs to the UPF0313 family. The cofactor is [4Fe-4S] cluster.

The polypeptide is UPF0313 protein CLK_3381 (Clostridium botulinum (strain Loch Maree / Type A3)).